We begin with the raw amino-acid sequence, 1221 residues long: DNA-directed RNA polymerase subunit beta' (1221 aa).

The Zn(2+) site is built by C60, C62, C75, and C78. D449, D451, and D453 together coordinate Mg(2+). Residues C821, C896, C903, and C906 each contribute to the Zn(2+) site.

This sequence belongs to the RNA polymerase beta' chain family. In terms of assembly, the RNAP catalytic core consists of 2 alpha, 1 beta, 1 beta' and 1 omega subunit. When a sigma factor is associated with the core the holoenzyme is formed, which can initiate transcription. Requires Mg(2+) as cofactor. It depends on Zn(2+) as a cofactor.

It carries out the reaction RNA(n) + a ribonucleoside 5'-triphosphate = RNA(n+1) + diphosphate. In terms of biological role, DNA-dependent RNA polymerase catalyzes the transcription of DNA into RNA using the four ribonucleoside triphosphates as substrates. This chain is DNA-directed RNA polymerase subunit beta', found in Lactobacillus delbrueckii subsp. bulgaricus (strain ATCC 11842 / DSM 20081 / BCRC 10696 / JCM 1002 / NBRC 13953 / NCIMB 11778 / NCTC 12712 / WDCM 00102 / Lb 14).